A 98-amino-acid chain; its full sequence is Small ribosomal subunit protein bS20 (98 aa).

This sequence belongs to the bacterial ribosomal protein bS20 family.

Functionally, binds directly to 16S ribosomal RNA. This is Small ribosomal subunit protein bS20 from Synechococcus elongatus (strain ATCC 33912 / PCC 7942 / FACHB-805) (Anacystis nidulans R2).